Here is a 361-residue protein sequence, read N- to C-terminus: dTDP-glucose 4,6-dehydratase (361 aa).

Residues 11-12 (FI), 32-35 (DKLT), 58-59 (DI), 80-84 (LAAES), and Thr99 each bind NAD(+). Ser84 is a substrate binding site. Substrate is bound at residue Thr133. The Proton donor role is filled by Asp134. Residues Glu135 and Tyr167 each act as proton acceptor in the active site. Position 167–171 (167–171 (YSASK)) interacts with NAD(+). A substrate-binding site is contributed by Asn196. Asn197 is a binding site for NAD(+). Residues 206-207 (KL), 222-224 (PIY), Arg231, Asn266, and 296-300 (DRPGH) contribute to the substrate site.

This sequence belongs to the NAD(P)-dependent epimerase/dehydratase family. dTDP-glucose dehydratase subfamily. In terms of assembly, homodimer. Requires NAD(+) as cofactor.

It carries out the reaction dTDP-alpha-D-glucose = dTDP-4-dehydro-6-deoxy-alpha-D-glucose + H2O. Its pathway is carbohydrate biosynthesis; dTDP-L-rhamnose biosynthesis. The protein operates within bacterial outer membrane biogenesis; LPS O-antigen biosynthesis. Its function is as follows. Catalyzes the dehydration of dTDP-D-glucose to form dTDP-6-deoxy-D-xylo-4-hexulose via a three-step process involving oxidation, dehydration and reduction. The protein is dTDP-glucose 4,6-dehydratase (rfbB) of Shigella flexneri.